A 229-amino-acid chain; its full sequence is MYDVNEWKHVFKLDPNKDLPDEQLERLCESGTDAIVIGGSDNITEDNVLRLMSKVRRFLVPCVLEVSTIDSIVPGFDLYFIPSVLNSKKADWIVGMHHQAMKEYGELMSMEEIVTEGYCIVNPDCKAAALTEADTHIETEDILAYARVAEHLLHLPIFYLEYSGMLADIEMVEKTKAVLDKSVLFYGGGIKDAETAERFGRHADVIVVGNAVYEDFDQALKTVAAVKTK.

Lysine 12 is a sn-glycerol 1-phosphate binding site. Residues aspartate 14 and serine 40 each contribute to the Mg(2+) site. Residues 159–164 (YLEYSG), glycine 189, and 209–210 (GN) contribute to the sn-glycerol 1-phosphate site.

Belongs to the GGGP/HepGP synthase family. Group I subfamily. In terms of assembly, homodimer. Requires Mg(2+) as cofactor.

It carries out the reaction sn-glycerol 1-phosphate + all-trans-heptaprenyl diphosphate = 3-heptaprenyl-sn-glycero-1-phosphate + diphosphate. Its pathway is membrane lipid metabolism; glycerophospholipid metabolism. Prenyltransferase that catalyzes in vivo the transfer of the heptaprenyl moiety of heptaprenyl pyrophosphate (HepPP; 35 carbon atoms) to the C3 hydroxyl of sn-glycerol-1-phosphate (G1P), producing heptaprenylglyceryl phosphate (HepGP). This reaction is an ether-bond-formation step in the biosynthesis of archaea-type G1P-based membrane lipids found in Bacillales. This chain is Heptaprenylglyceryl phosphate synthase, found in Bacillus velezensis (strain DSM 23117 / BGSC 10A6 / LMG 26770 / FZB42) (Bacillus amyloliquefaciens subsp. plantarum).